The chain runs to 750 residues: 5-methyltetrahydropteroyltriglutamate--homocysteine methyltransferase (750 aa).

Residues 15-18 (RELK) and Lys114 contribute to the 5-methyltetrahydropteroyltri-L-glutamate site. L-homocysteine contacts are provided by residues 425–427 (IGS) and Glu478. Residues 425–427 (IGS) and Glu478 contribute to the L-methionine site. 5-methyltetrahydropteroyltri-L-glutamate is bound at residue Trp555. Asp593 serves as a coordination point for L-homocysteine. Position 593 (Asp593) interacts with L-methionine. Glu599 is a binding site for 5-methyltetrahydropteroyltri-L-glutamate. Zn(2+) is bound by residues His636, Cys638, and Glu660. His689 (proton donor) is an active-site residue. Zn(2+) is bound at residue Cys721.

It belongs to the vitamin-B12 independent methionine synthase family. Zn(2+) serves as cofactor.

It catalyses the reaction 5-methyltetrahydropteroyltri-L-glutamate + L-homocysteine = tetrahydropteroyltri-L-glutamate + L-methionine. It participates in amino-acid biosynthesis; L-methionine biosynthesis via de novo pathway; L-methionine from L-homocysteine (MetE route): step 1/1. Its function is as follows. Catalyzes the transfer of a methyl group from 5-methyltetrahydrofolate to homocysteine resulting in methionine formation. The protein is 5-methyltetrahydropteroyltriglutamate--homocysteine methyltransferase of Streptococcus gordonii (strain Challis / ATCC 35105 / BCRC 15272 / CH1 / DL1 / V288).